The primary structure comprises 118 residues: MARVVALVLLGLLSLTGLEAVQRIPKVQVYSRHPAENGKPNFLNCYVSGFHPPEIEIDLLKNGEKMKVDRSDLSFSKDWSFYLLVHTDFTPNGVDEYSCRVQHSTLKEPLIVKWDRDL.

A signal peptide spans 1–20 (MARVVALVLLGLLSLTGLEA). The 87-residue stretch at 25 to 111 (PKVQVYSRHP…QHSTLKEPLI (87 aa)) folds into the Ig-like C1-type domain. Cysteine 45 and cysteine 99 form a disulfide bridge.

Belongs to the beta-2-microglobulin family. In terms of assembly, heterodimer of an alpha chain and a beta chain. Beta-2-microglobulin is the beta-chain of major histocompatibility complex class I molecules.

It localises to the secreted. In terms of biological role, component of the class I major histocompatibility complex (MHC). Involved in the presentation of peptide antigens to the immune system. The sequence is that of Beta-2-microglobulin (B2M) from Equus asinus (Donkey).